A 386-amino-acid polypeptide reads, in one-letter code: Palmitoyltransferase ZDHHC18 (386 aa).

Residues 1–65 (MKDCEYQQIS…GSGSLGRRPR (65 aa)) form a disordered region. At 1–88 (MKDCEYQQIS…CGGRLMLAGH (88 aa)) the chain is on the cytoplasmic side. Serine 19 bears the Phosphoserine mark. Residues 27 to 40 (PAAPPGPSPGPAPG) are compositionally biased toward pro residues. Positions 49-59 (SGSGSGSGSGS) are enriched in gly residues. Residues 89–109 (GGVFALTLLLILSTTILFFIF) form a helical membrane-spanning segment. Topologically, residues 110 to 117 (DCPYLART) are lumenal. A helical transmembrane segment spans residues 118–138 (LTLAIPIIAAILFFFVMSCLL). Over 139–233 (QTSFTDPGIL…GNCVGRRNYR (95 aa)) the chain is Cytoplasmic. Residues 190–240 (KYCFTCKMFRPPRTSHCSVCDNCVERFDHHCPWVGNCVGRRNYRFFYAFIL) form the DHHC domain. Cysteine 220 acts as the S-palmitoyl cysteine intermediate in catalysis. Residues 234-254 (FFYAFILSLSFLTAFIFACVV) traverse the membrane as a helical segment. The Lumenal segment spans residues 255 to 275 (THLTLLSQGSNFLSALNKTPA). A helical transmembrane segment spans residues 276–296 (GVLELVICFFSIWSILGLSGF). The Cytoplasmic segment spans residues 297–386 (HTYLVASNLT…PDASMVGGHP (90 aa)). Residues 362–386 (LPSPIRSDEPACGAKPDASMVGGHP) are disordered.

It belongs to the DHHC palmitoyltransferase family. ERF2/ZDHHC9 subfamily.

It localises to the golgi apparatus membrane. It carries out the reaction L-cysteinyl-[protein] + hexadecanoyl-CoA = S-hexadecanoyl-L-cysteinyl-[protein] + CoA. Functionally, palmitoyltransferase that catalyzes the addition of palmitate onto various protein substrates, such as CGAS, HRAS and LCK. Acts as a negative regulator of the cGAS-STING pathway be mediating palmitoylation and inactivation of CGAS. May also have a palmitoyltransferase activity toward the beta-2 adrenergic receptor/ADRB2 and therefore regulate G protein-coupled receptor signaling. This is Palmitoyltransferase ZDHHC18 from Rattus norvegicus (Rat).